The sequence spans 432 residues: Adenylosuccinate synthetase (432 aa).

Residues 12-18 and 40-42 each bind GTP; these read GDEGKGK and GHT. The active-site Proton acceptor is the aspartate 13. Positions 13 and 40 each coordinate Mg(2+). Residues 13–16, 38–41, threonine 131, arginine 145, glutamine 226, threonine 241, and arginine 305 contribute to the IMP site; these read DEGK and NAGH. The Proton donor role is filled by histidine 41. 301 to 307 provides a ligand contact to substrate; that stretch reads ATTGRPR. GTP-binding positions include arginine 307, 333 to 335, and 415 to 417; these read KLD and STG.

This sequence belongs to the adenylosuccinate synthetase family. Homodimer. It depends on Mg(2+) as a cofactor.

Its subcellular location is the cytoplasm. The enzyme catalyses IMP + L-aspartate + GTP = N(6)-(1,2-dicarboxyethyl)-AMP + GDP + phosphate + 2 H(+). Its pathway is purine metabolism; AMP biosynthesis via de novo pathway; AMP from IMP: step 1/2. Plays an important role in the de novo pathway of purine nucleotide biosynthesis. Catalyzes the first committed step in the biosynthesis of AMP from IMP. The polypeptide is Adenylosuccinate synthetase (Magnetococcus marinus (strain ATCC BAA-1437 / JCM 17883 / MC-1)).